Reading from the N-terminus, the 505-residue chain is ATP synthase subunit alpha (505 aa).

An ATP-binding site is contributed by 171–178 (GDRQTGKT).

Belongs to the ATPase alpha/beta chains family. As to quaternary structure, F-type ATPases have 2 components, CF(1) - the catalytic core - and CF(0) - the membrane proton channel. CF(1) has five subunits: alpha(3), beta(3), gamma(1), delta(1), epsilon(1). CF(0) has three main subunits: a(1), b(2) and c(9-12). The alpha and beta chains form an alternating ring which encloses part of the gamma chain. CF(1) is attached to CF(0) by a central stalk formed by the gamma and epsilon chains, while a peripheral stalk is formed by the delta and b chains.

The protein localises to the cell inner membrane. It carries out the reaction ATP + H2O + 4 H(+)(in) = ADP + phosphate + 5 H(+)(out). Its function is as follows. Produces ATP from ADP in the presence of a proton gradient across the membrane. The alpha chain is a regulatory subunit. The sequence is that of ATP synthase subunit alpha from Aliarcobacter butzleri (strain RM4018) (Arcobacter butzleri).